Reading from the N-terminus, the 432-residue chain is Adenylosuccinate synthetase (432 aa).

GTP is bound by residues 13–19 (GDEGKGK) and 41–43 (GHT). The active-site Proton acceptor is the D14. D14 and G41 together coordinate Mg(2+). Residues 14-17 (DEGK), 39-42 (NAGH), T130, R144, Q225, T240, and R304 each bind IMP. Catalysis depends on H42, which acts as the Proton donor. 300-306 (ATTGRPR) contacts substrate. GTP contacts are provided by residues R306, 332 to 334 (KLD), and 415 to 417 (STG).

This sequence belongs to the adenylosuccinate synthetase family. As to quaternary structure, homodimer. The cofactor is Mg(2+).

It is found in the cytoplasm. It carries out the reaction IMP + L-aspartate + GTP = N(6)-(1,2-dicarboxyethyl)-AMP + GDP + phosphate + 2 H(+). It functions in the pathway purine metabolism; AMP biosynthesis via de novo pathway; AMP from IMP: step 1/2. In terms of biological role, plays an important role in the de novo pathway of purine nucleotide biosynthesis. Catalyzes the first committed step in the biosynthesis of AMP from IMP. The protein is Adenylosuccinate synthetase of Hahella chejuensis (strain KCTC 2396).